The primary structure comprises 889 residues: Exocyst complex component 1 (889 aa).

2 positions are modified to phosphoserine: Ser-145 and Ser-148. Positions 156-269 (RAVQKTQHMD…GHVKETMEKI (114 aa)) form a coiled coil. Residue Ser-456 is modified to Phosphoserine.

The protein belongs to the SEC3 family. In terms of assembly, the exocyst complex is composed of Sec3/Exoc1, Sec5/Exoc2, Sec6/Exoc3, Sec8/Exoc4, Sec10/Exoc5, Sec15/Exoc6, Exo70/Exoc7 and Exo84/Exoc8.

Functionally, component of the exocyst complex involved in the docking of exocytic vesicles with fusion sites on the plasma membrane. The protein is Exocyst complex component 1 of Drosophila melanogaster (Fruit fly).